The primary structure comprises 649 residues: Mediator of RNA polymerase II transcription subunit 17 (649 aa).

The tract at residues 51–79 (QGSGSEEEEAAGPDGDAPDWGGAGADQDD) is disordered.

It belongs to the Mediator complex subunit 17 family. As to quaternary structure, component of the Mediator complex, which is composed of MED1, MED4, MED6, MED7, MED8, MED9, MED10, MED11, MED12, MED13, MED13L, MED14, MED15, MED16, MED17, MED18, MED19, MED20, MED21, MED22, MED23, MED24, MED25, MED26, MED27, MED29, MED30, MED31, CCNC, CDK8 and CDC2L6/CDK11. The MED12, MED13, CCNC and CDK8 subunits form a distinct module termed the CDK8 module. Mediator containing the CDK8 module is less active than Mediator lacking this module in supporting transcriptional activation. Individual preparations of the Mediator complex lacking one or more distinct subunits have been variously termed ARC, CRSP, DRIP, PC2, SMCC and TRAP. Interacts with STAT2. Interacts with GATA1 and PPARG.

The protein localises to the nucleus. Functionally, component of the Mediator complex, a coactivator involved in the regulated transcription of nearly all RNA polymerase II-dependent genes. Mediator functions as a bridge to convey information from gene-specific regulatory proteins to the basal RNA polymerase II transcription machinery. Mediator is recruited to promoters by direct interactions with regulatory proteins and serves as a scaffold for the assembly of a functional preinitiation complex with RNA polymerase II and the general transcription factors. The protein is Mediator of RNA polymerase II transcription subunit 17 (Med17) of Mus musculus (Mouse).